The sequence spans 887 residues: Pyruvate, phosphate dikinase 2 (887 aa).

The residue at position 467 (Thr467) is a Phosphothreonine; by PDRP1. His469 acts as the Tele-phosphohistidine intermediate in catalysis. 7 residues coordinate substrate: Arg575, Arg632, Glu761, Gly782, Thr783, Asn784, and Asp785. A Mg(2+)-binding site is contributed by Glu761. Position 785 (Asp785) interacts with Mg(2+). The active-site Proton donor is the Cys847.

This sequence belongs to the PEP-utilizing enzyme family. Mg(2+) serves as cofactor.

It localises to the cytoplasm. It catalyses the reaction pyruvate + phosphate + ATP = phosphoenolpyruvate + AMP + diphosphate + H(+). Its function is as follows. Formation of phosphoenolpyruvate. In Oryza sativa subsp. japonica (Rice), this protein is Pyruvate, phosphate dikinase 2 (PPDK2).